Consider the following 157-residue polypeptide: Neutrophil recruitment protein (157 aa).

Residues 1 to 19 (MCSIWLTFFLSFLILNTKA) form the signal peptide.

This sequence belongs to the PBP/GOBP family. Interacts with mouse TLR1; the interaction promotes activation of canonical NF-kappa-B signaling in host macrophages. Interacts with human TLR1. Interacts with mouse TLR4; the interaction promotes activation of canonical NF-kappa-B signaling in host macrophages. Interacts with human TLR4. As to expression, female salivary gland (at protein level).

The protein localises to the secreted. Functionally, activates MyD88-dependent canonical NF-kappa-B signaling in host macrophages via interaction with host TLR1 and TLR4; this drives the expression of neutrophil chemoattractants, followed by the subsequent influx of neutrophils and recruitment of myeloid cells at the bite site. In terms of biological role, (Microbial infection) Promotes Zika virus infection in mouse model by facilitating recruitment of flavivirus-permissive myeloid cells at the bite site. Its function is as follows. (Microbial infection) Promotes dengue virus infection in mouse model by facilitating recruitment of flavivirus-permissive myeloid cells at the bite site. The sequence is that of Neutrophil recruitment protein from Aedes aegypti (Yellowfever mosquito).